Here is a 400-residue protein sequence, read N- to C-terminus: Subtilisin-like protease 11 (400 aa).

Residues 1–19 (MGLFTVVFTAIAALSAVDA) form the signal peptide. Positions 20–117 (AELLRSPNSK…VEHDRYVYID (98 aa)) are excised as a propeptide. The region spanning 35-116 (SYLVVMKDSV…FVEHDRYVYI (82 aa)) is the Inhibitor I9 domain. A Peptidase S8 domain is found at 127–400 (SWGLGRVSHR…NKLLYNGSGQ (274 aa)). The N-linked (GlcNAc...) asparagine glycan is linked to Asn-138. Active-site charge relay system residues include Asp-159 and His-191. 3 N-linked (GlcNAc...) asparagine glycosylation sites follow: Asn-252, Asn-336, and Asn-337. The Charge relay system role is filled by Ser-346. N-linked (GlcNAc...) asparagine glycans are attached at residues Asn-388 and Asn-396.

Belongs to the peptidase S8 family.

It localises to the secreted. Its function is as follows. Secreted subtilisin-like serine protease with keratinolytic activity that contributes to pathogenicity. The sequence is that of Subtilisin-like protease 11 (SUB11) from Arthroderma gypseum (strain ATCC MYA-4604 / CBS 118893) (Microsporum gypseum).